Reading from the N-terminus, the 437-residue chain is Enolase 1 (437 aa).

Lys60 participates in a covalent cross-link: Glycyl lysine isopeptide (Lys-Gly) (interchain with G-Cter in ubiquitin). 2 positions are modified to phosphoserine: Ser119 and Ser138. Substrate is bound by residues His160 and Glu169. Ser188 is modified (phosphoserine). The Proton donor role is filled by Glu212. Residue Lys243 forms a Glycyl lysine isopeptide (Lys-Gly) (interchain with G-Cter in ubiquitin) linkage. Residues Asp247 and Glu296 each contribute to the Mg(2+) site. Glu296 lines the substrate pocket. Thr313 carries the post-translational modification Phosphothreonine. Position 321 (Asp321) interacts with substrate. Asp321 contacts Mg(2+). Residue Thr324 is modified to Phosphothreonine. Lys346 functions as the Proton acceptor in the catalytic mechanism. Lys358 participates in a covalent cross-link: Glycyl lysine isopeptide (Lys-Gly) (interchain with G-Cter in ubiquitin). Substrate-binding positions include Ser373–Ser376 and Lys397.

The protein belongs to the enolase family. As to quaternary structure, homodimer. Requires Mg(2+) as cofactor.

Its subcellular location is the cytoplasm. The catalysed reaction is (2R)-2-phosphoglycerate = phosphoenolpyruvate + H2O. It participates in carbohydrate degradation; glycolysis; pyruvate from D-glyceraldehyde 3-phosphate: step 4/5. The chain is Enolase 1 (ENO1) from Saccharomyces cerevisiae (strain ATCC 204508 / S288c) (Baker's yeast).